The following is a 549-amino-acid chain: Chaperonin GroEL (549 aa).

ATP-binding positions include 29-32 (TAGP), K50, 86-90 (DGTTT), G417, and D499.

It belongs to the chaperonin (HSP60) family. Forms a cylinder of 14 subunits composed of two heptameric rings stacked back-to-back. Interacts with the co-chaperonin GroES.

It localises to the cytoplasm. The catalysed reaction is ATP + H2O + a folded polypeptide = ADP + phosphate + an unfolded polypeptide.. In terms of biological role, together with its co-chaperonin GroES, plays an essential role in assisting protein folding. The GroEL-GroES system forms a nano-cage that allows encapsulation of the non-native substrate proteins and provides a physical environment optimized to promote and accelerate protein folding. In Anaplasma marginale (strain Florida), this protein is Chaperonin GroEL.